Here is a 660-residue protein sequence, read N- to C-terminus: Neurexin-2-beta (660 aa).

Over residues Met1–Gly10 the composition is skewed to gly residues. Positions Met1–Pro27 are disordered. The N-terminal stretch at Met1–Gly46 is a signal peptide. Over Ala47–Thr584 the chain is Extracellular. In terms of domain architecture, Laminin G-like spans Thr87–Ser295. 2 residues coordinate Ca(2+): Asp139 and Val156. N-linked (GlcNAc...) asparagine glycosylation is present at Asn186. 2 residues coordinate Ca(2+): Ile238 and Asn240. An O-linked (Xyl...) (heparan sulfate) serine glycan is attached at Ser350. Disordered stretches follow at residues Ala408 to Thr458 and Glu537 to Pro571. A glycan (N-linked (GlcNAc...) asparagine) is linked at Asn561. A helical transmembrane segment spans residues Gly585–Met605. Residues Tyr606–Val660 are Cytoplasmic-facing. Residues Asn627 to Val660 form a disordered region.

The protein belongs to the neurexin family. In terms of assembly, interacts (via cytoplasmic C-terminal region) with CASK. Specific isoforms bind alpha-dystroglycan and neuroligins NLGN1, NLGN2 and NLGN3. Interacts with CBLN1, CBLN2 and, less avidly, with CBLN4. Interacts with CLSTN3. O-glycosylated; contains heparan sulfate. Heparan sulfate attachment is required for synapse development by mediating interactions with neuroligins.

It is found in the presynaptic cell membrane. Functionally, neuronal cell surface protein that may be involved in cell recognition and cell adhesion. This Mus musculus (Mouse) protein is Neurexin-2-beta.